A 497-amino-acid chain; its full sequence is Probable malate:quinone oxidoreductase (497 aa).

The protein belongs to the MQO family. FAD is required as a cofactor.

The catalysed reaction is (S)-malate + a quinone = a quinol + oxaloacetate. It participates in carbohydrate metabolism; tricarboxylic acid cycle; oxaloacetate from (S)-malate (quinone route): step 1/1. This Bacillus cereus (strain ATCC 14579 / DSM 31 / CCUG 7414 / JCM 2152 / NBRC 15305 / NCIMB 9373 / NCTC 2599 / NRRL B-3711) protein is Probable malate:quinone oxidoreductase.